Consider the following 87-residue polypeptide: Small ribosomal subunit protein bS20 (87 aa).

Residues 67 to 87 (HKNNGSRKASRLDAYVQSKQQ) are disordered.

The protein belongs to the bacterial ribosomal protein bS20 family.

Functionally, binds directly to 16S ribosomal RNA. This is Small ribosomal subunit protein bS20 from Metamycoplasma arthritidis (strain 158L3-1) (Mycoplasma arthritidis).